A 460-amino-acid polypeptide reads, in one-letter code: Cysteine--tRNA ligase (460 aa).

Residue C28 participates in Zn(2+) binding. The 'HIGH' region motif lies at 30–40 (VTIYDLCHIGH). Positions 209, 234, and 238 each coordinate Zn(2+). The 'KMSKS' region signature appears at 266 to 270 (KMSKS). K269 provides a ligand contact to ATP.

It belongs to the class-I aminoacyl-tRNA synthetase family. In terms of assembly, monomer. Requires Zn(2+) as cofactor.

It is found in the cytoplasm. It carries out the reaction tRNA(Cys) + L-cysteine + ATP = L-cysteinyl-tRNA(Cys) + AMP + diphosphate. This is Cysteine--tRNA ligase from Vibrio parahaemolyticus serotype O3:K6 (strain RIMD 2210633).